The primary structure comprises 339 residues: UDP-N-acetylglucosamine/UDP-N-acetylgalactosamine transporter nstp-4 (339 aa).

Transmembrane regions (helical) follow at residues Leu-44–Ile-64, Leu-94–Leu-114, Tyr-148–Gly-168, Ile-186–Phe-206, Leu-224–Ile-244, Gly-255–Val-275, Ile-281–Val-301, and Leu-305–Tyr-325.

Belongs to the nucleotide-sugar transporter family. SLC35A subfamily. In terms of tissue distribution, widely expressed, including in pharynx and pharyngeal gland cells, seam cells, spermatheca, stomatointestinal muscle, vulva, and body wall muscle.

The protein resides in the golgi apparatus membrane. Uridine diphosphate-N-acetylglucosamine (UDP-GlcNAc) transporter in the Golgi apparatus. UDP-N-acetylgalactosamine (UDP-GalNAc) transporter in the Golgi apparatus. Apparently transports UDP-GlcNAc and UDP-GalNAc simultaneously, and independently, by an unknown mechanism. Functions redundantly with nucleotide sugar transporter srf-3. May be involved in gonadal development. In Caenorhabditis elegans, this protein is UDP-N-acetylglucosamine/UDP-N-acetylgalactosamine transporter nstp-4.